Here is a 284-residue protein sequence, read N- to C-terminus: 4-hydroxybenzoate octaprenyltransferase (284 aa).

The next 9 membrane-spanning stretches (helical) occupy residues I19–L39, I42–I62, G85–I105, V107–L127, F134–F154, A165–L185, I211–F231, S233–Y253, and C261–I281.

This sequence belongs to the UbiA prenyltransferase family. The cofactor is Mg(2+).

The protein resides in the cell inner membrane. It catalyses the reaction all-trans-octaprenyl diphosphate + 4-hydroxybenzoate = 4-hydroxy-3-(all-trans-octaprenyl)benzoate + diphosphate. It functions in the pathway cofactor biosynthesis; ubiquinone biosynthesis. Catalyzes the prenylation of para-hydroxybenzoate (PHB) with an all-trans polyprenyl group. Mediates the second step in the final reaction sequence of ubiquinone-8 (UQ-8) biosynthesis, which is the condensation of the polyisoprenoid side chain with PHB, generating the first membrane-bound Q intermediate 3-octaprenyl-4-hydroxybenzoate. In Francisella tularensis subsp. novicida (strain U112), this protein is 4-hydroxybenzoate octaprenyltransferase.